Here is a 124-residue protein sequence, read N- to C-terminus: Large ribosomal subunit protein bL20 (124 aa).

This sequence belongs to the bacterial ribosomal protein bL20 family.

Functionally, binds directly to 23S ribosomal RNA and is necessary for the in vitro assembly process of the 50S ribosomal subunit. It is not involved in the protein synthesizing functions of that subunit. The polypeptide is Large ribosomal subunit protein bL20 (Ehrlichia canis (strain Jake)).